Consider the following 130-residue polypeptide: Small ribosomal subunit protein uS11c (130 aa).

This sequence belongs to the universal ribosomal protein uS11 family. Part of the 30S ribosomal subunit.

It is found in the plastid. The protein localises to the chloroplast. In Zygnema circumcarinatum (Green alga), this protein is Small ribosomal subunit protein uS11c.